The sequence spans 136 residues: Large ribosomal subunit protein eL27B (136 aa).

Belongs to the eukaryotic ribosomal protein eL27 family. Component of the large ribosomal subunit (LSU). Mature yeast ribosomes consist of a small (40S) and a large (60S) subunit. The 40S small subunit contains 1 molecule of ribosomal RNA (18S rRNA) and at least 33 different proteins. The large 60S subunit contains 3 rRNA molecules (25S, 5.8S and 5S rRNA) and at least 46 different proteins.

The protein resides in the cytoplasm. Its function is as follows. Component of the ribosome, a large ribonucleoprotein complex responsible for the synthesis of proteins in the cell. The small ribosomal subunit (SSU) binds messenger RNAs (mRNAs) and translates the encoded message by selecting cognate aminoacyl-transfer RNA (tRNA) molecules. The large subunit (LSU) contains the ribosomal catalytic site termed the peptidyl transferase center (PTC), which catalyzes the formation of peptide bonds, thereby polymerizing the amino acids delivered by tRNAs into a polypeptide chain. The nascent polypeptides leave the ribosome through a tunnel in the LSU and interact with protein factors that function in enzymatic processing, targeting, and the membrane insertion of nascent chains at the exit of the ribosomal tunnel. This Schizosaccharomyces pombe (strain 972 / ATCC 24843) (Fission yeast) protein is Large ribosomal subunit protein eL27B (rpl2702).